The primary structure comprises 436 residues: Protein translocase subunit SecY (436 aa).

8 helical membrane passes run 17-37, 72-92, 122-142, 146-166, 209-229, 269-289, 309-329, and 380-400; these read ILLT…PVPY, FGLL…IQLL, TFFW…EVIF, LQVY…VLWF, FSNI…CIYI, VMPL…FEII, ISYW…IFFF, and IFLI…NLNI.

It belongs to the SecY/SEC61-alpha family. In terms of assembly, component of the plastid Sec protein translocase complex, which is composed of at least SecY and SecE.

The protein resides in the plastid. It is found in the chloroplast thylakoid membrane. In terms of biological role, the central subunit of the protein translocation channel SecYE. Consists of two halves. These two domains form a lateral gate at the front which open onto the bilayer between TMs 2 and 7, and are clamped together by SecE at the back. The channel is closed by both a pore ring composed of hydrophobic SecY resides and a short helix (helix 2A) on the extracellular side of the membrane which forms a plug. This Vaucheria litorea (Yellow-green alga) protein is Protein translocase subunit SecY.